The following is a 181-amino-acid chain: ADP-ribosylation factor 1-like 2 (181 aa).

G2 carries N-myristoyl glycine lipidation. Residues 3–16 (NVFGSLFKGLFGKR) form an important for the stable binding to the membranes region. GTP is bound by residues 24–32 (GLDAAGKTT), 126–129 (NKQD), and A160.

Belongs to the small GTPase superfamily. Arf family. Expressed in hypodermis, intestine, spermatheca, uterus, gonadal sheath, vulva cells, pharynx muscle, body wall muscle, head neurons, ventral nerve cord.

It is found in the golgi apparatus membrane. The enzyme catalyses GTP + H2O = GDP + phosphate + H(+). Alternates between an inactive GDP-bound form and an active GTP-bound form. Activated by a guanine nucleotide-exchange factor (GEF) and inactivated by GTPase-activating protein (GAP). In terms of biological role, small GTPase involved in protein trafficking between different compartments. Modulates vesicle budding and uncoating within the Golgi complex. In its GTP-bound form, triggers the recruitment of coatomer proteins to the Golgi membrane. The hydrolysis of ARF1-bound GTP, which is mediated by ARFGAPs proteins, is required for dissociation of coat proteins from Golgi membranes and vesicles. Involved in endoplasmic reticulum dynamics during embryogenesis. Also required for adult germline function. Plays a role in cell shedding during embryogenesis probably by promoting the endocytosis of cell adhesion molecules. During neurogenesis, involved in cell autonomous Q.p neuroblast asymmetric divisions that generate one precursor cell and one apoptotic cell, probably by controlling endocytosis. Plays a role in maintaining mitochondrial morphology. The chain is ADP-ribosylation factor 1-like 2 from Caenorhabditis elegans.